Here is a 564-residue protein sequence, read N- to C-terminus: MFS-type transporter astH (564 aa).

An N-linked (GlcNAc...) asparagine glycan is attached at N23. Positions K26 to S59 are disordered. Over residues Q43–V53 the composition is skewed to polar residues. The next 4 helical transmembrane spans lie at L69–I89, D106–G126, G143–I163, and G197–F217. N220 carries an N-linked (GlcNAc...) asparagine glycan. The next 6 membrane-spanning stretches (helical) occupy residues W225 to F245, L266 to G286, I297 to W317, L339 to F359, L375 to L395, and G396 to L416. The N-linked (GlcNAc...) asparagine glycan is linked to N425. 2 helical membrane passes run T461–G481 and F537–I557.

Belongs to the major facilitator superfamily. TCR/Tet family.

It is found in the membrane. Functionally, MFS-type transporter; part of the gene cluster that mediates the biosynthesis of astellolides, drimane-type sesquiterpene esters that show antimicrobial, anti-inflammatory, and anti-tumor activities. Seems not to be involved in astellolides translocation. This chain is MFS-type transporter astH, found in Aspergillus oryzae (strain ATCC 42149 / RIB 40) (Yellow koji mold).